The chain runs to 405 residues: Probable succinyl-diaminopimelate desuccinylase (405 aa).

His72 is a binding site for Zn(2+). Asp74 is an active-site residue. A Zn(2+)-binding site is contributed by Asp105. The active-site Proton acceptor is Glu139. Residues Glu140, Glu165, and His377 each contribute to the Zn(2+) site.

It belongs to the peptidase M20A family. Zn(2+) is required as a cofactor. Requires Co(2+) as cofactor.

It catalyses the reaction N-succinyl-(2S,6S)-2,6-diaminopimelate + H2O = (2S,6S)-2,6-diaminopimelate + succinate. It participates in amino-acid biosynthesis; L-lysine biosynthesis via DAP pathway; LL-2,6-diaminopimelate from (S)-tetrahydrodipicolinate (succinylase route): step 3/3. This is Probable succinyl-diaminopimelate desuccinylase (dapE) from Staphylococcus epidermidis (strain ATCC 35984 / DSM 28319 / BCRC 17069 / CCUG 31568 / BM 3577 / RP62A).